Consider the following 496-residue polypeptide: Glycerol kinase (496 aa).

Thr12 is a binding site for ADP. ATP-binding residues include Thr12, Thr13, and Ser14. Residue Thr12 participates in sn-glycerol 3-phosphate binding. Residue Arg16 participates in ADP binding. Residues Arg82, Glu83, and Tyr134 each contribute to the sn-glycerol 3-phosphate site. Residues Arg82, Glu83, and Tyr134 each contribute to the glycerol site. His230 carries the post-translational modification Phosphohistidine; by HPr. Residue Asp244 coordinates sn-glycerol 3-phosphate. The glycerol site is built by Asp244 and Gln245. ADP is bound by residues Thr266 and Gly309. Residues Thr266, Gly309, Gln313, and Gly410 each contribute to the ATP site. The ADP site is built by Gly410 and Asn414.

This sequence belongs to the FGGY kinase family. Homotetramer and homodimer (in equilibrium). Post-translationally, the phosphoenolpyruvate-dependent sugar phosphotransferase system (PTS), including enzyme I, and histidine-containing protein (HPr) are required for the phosphorylation, which leads to the activation of the enzyme.

It carries out the reaction glycerol + ATP = sn-glycerol 3-phosphate + ADP + H(+). Its pathway is polyol metabolism; glycerol degradation via glycerol kinase pathway; sn-glycerol 3-phosphate from glycerol: step 1/1. Activated by phosphorylation and inhibited by fructose 1,6-bisphosphate (FBP). In terms of biological role, key enzyme in the regulation of glycerol uptake and metabolism. Catalyzes the phosphorylation of glycerol to yield sn-glycerol 3-phosphate. In Geobacillus sp. (strain WCH70), this protein is Glycerol kinase.